The primary structure comprises 369 residues: CLIP domain-containing serine protease HP8 (369 aa).

A signal peptide spans 1-24; sequence MKTPFEKIRIISCILVIVSTNVVG. Positions 25–81 are excised as a propeptide; sequence QKCNGGANCIPLEECTDLFQQLKQGNSPQLTRLLRGLHCGFEDLNSPKICCPPEFLA. Residues 26–75 form the Clip domain; it reads KCNGGANCIPLEECTDLFQQLKQGNSPQLTRLLRGLHCGFEDLNSPKICC. 8 disulfide bridges follow: C27-C74, C33-C63, C39-C75, C105-C239, C142-C158, C186-C191, C286-C303, and C313-C344. In terms of domain architecture, Peptidase S1 spans 113–368; that stretch reads IFGGIQTEID…FMDWILSKLE (256 aa). The active-site Charge relay system is the H157. Ca(2+) contacts are provided by E177, N179, T182, and D185. An N-linked (GlcNAc...) asparagine glycan is attached at N179. D219 (charge relay system) is an active-site residue. S317 serves as the catalytic Charge relay system.

It belongs to the peptidase S1 family. CLIP subfamily. In the active form, heterodimer of a light chain and a heavy chain; disulfide-linked. In terms of processing, proteolytically cleaved for activation. Cleavage produces a light chain and a catalytic heavy chain which remains covalently associated probably through an interchain disulfide bond. In terms of tissue distribution, in larvae, expressed in the fat body and hemocytes.

It localises to the secreted. It is found in the cytoplasm. Inhibited by (p-amidinophenyl) methanesulfonyl fluoride, p-nitrophenyl-p'-guanidinobenzoate, D-phenylalanyl-L-prolyl-L-arginyl chloromethane, leupeptin, antipain and to a lesser extent by antithrombin III. Its function is as follows. Endopeptidase with selective post-Arg cleavage site. Functions in the innate immune response to fungal and Gram-positive bacterial infections. Upon pathogen infection promotes nodulation; a cellular defense response in which hemocytes surround and isolate invading pathogens forming aggregates called nodules. Involved in activating nodule formation in response to infection with M.luteus, E.coli or S.cerevisiae. Able to bind the microbes M.luteus, E.coli or S.cerevisiae. According to another report, does not bind microorganisms. This chain is CLIP domain-containing serine protease HP8, found in Bombyx mori (Silk moth).